A 216-amino-acid chain; its full sequence is Nucleoside triphosphate pyrophosphatase (216 aa).

Catalysis depends on aspartate 82, which acts as the Proton acceptor.

It belongs to the Maf family. It depends on a divalent metal cation as a cofactor.

The protein resides in the cytoplasm. The catalysed reaction is a ribonucleoside 5'-triphosphate + H2O = a ribonucleoside 5'-phosphate + diphosphate + H(+). It catalyses the reaction a 2'-deoxyribonucleoside 5'-triphosphate + H2O = a 2'-deoxyribonucleoside 5'-phosphate + diphosphate + H(+). Functionally, nucleoside triphosphate pyrophosphatase. May have a dual role in cell division arrest and in preventing the incorporation of modified nucleotides into cellular nucleic acids. The chain is Nucleoside triphosphate pyrophosphatase from Mycobacterium marinum (strain ATCC BAA-535 / M).